The primary structure comprises 971 residues: Reversion-inducing cysteine-rich protein with Kazal motifs (971 aa).

Positions Met1–Ala22 are cleaved as a signal peptide. A Knot 1 repeat occupies Cys37–Cys84. Residues Cys37–Cys338 are 5 X Knot repeats. Residues Asn39 and Asn86 are each glycosylated (N-linked (GlcNAc...) asparagine). 2 Knot repeats span residues Cys104 to Cys141 and Cys151 to Cys197. Residue Asn200 is glycosylated (N-linked (GlcNAc...) asparagine). Knot repeat units follow at residues Cys216 to Cys263 and Cys292 to Cys338. Residues Asn297 and Asn352 are each glycosylated (N-linked (GlcNAc...) asparagine). Kazal-like domains follow at residues Thr627 to Ser673, Thr698 to Pro752, and Phe753 to Ala789. 6 disulfides stabilise this stretch: Cys633–Cys658, Cys635–Cys654, Cys643–Cys671, Cys716–Cys735, Cys724–Cys750, and Cys761–Cys787. Residue Ser942 is the site of GPI-anchor amidated serine attachment. A propeptide spans Ala943–Asn971 (removed in mature form).

It belongs to the RECK family. As to quaternary structure, interacts (via knot repeats) with WNT7A (via disordered linker region); the interaction is direct. Interacts (via knot repeats) with WNT7B (via disordered linker region); the interaction is direct. Interacts with ADGRA2; the interaction is direct. Interacts with MMP9. N-glycosylated. In terms of tissue distribution, expressed in various tissues and untransformed cells. It is undetectable in tumor-derived cell lines and oncogenically transformed cells.

It is found in the cell membrane. In terms of biological role, functions together with ADGRA2 to enable brain endothelial cells to selectively respond to Wnt7 signals (WNT7A or WNT7B). Plays a key role in Wnt7-specific responses: required for central nervous system (CNS) angiogenesis and blood-brain barrier regulation. Acts as a Wnt7-specific coactivator of canonical Wnt signaling by decoding Wnt ligands: acts by interacting specifically with the disordered linker region of Wnt7, thereby conferring ligand selectivity for Wnt7. ADGRA2 is then required to deliver RECK-bound Wnt7 to frizzled by assembling a higher-order RECK-ADGRA2-Fzd-LRP5-LRP6 complex. Also acts as a serine protease inhibitor: negatively regulates matrix metalloproteinase-9 (MMP9) by suppressing MMP9 secretion and by direct inhibition of its enzymatic activity. Also inhibits metalloproteinase activity of MMP2 and MMP14 (MT1-MMP). The sequence is that of Reversion-inducing cysteine-rich protein with Kazal motifs from Homo sapiens (Human).